Reading from the N-terminus, the 1060-residue chain is Isoleucine--tRNA ligase (1060 aa).

The short motif at 55–65 is the 'HIGH' region element; the sequence is PTANGTPGVHH. The short motif at 608-612 is the 'KMSKS' region element; that stretch reads KMSKH. ATP is bound at residue K611.

Belongs to the class-I aminoacyl-tRNA synthetase family. IleS type 2 subfamily. In terms of assembly, monomer. Zn(2+) serves as cofactor.

It is found in the cytoplasm. It catalyses the reaction tRNA(Ile) + L-isoleucine + ATP = L-isoleucyl-tRNA(Ile) + AMP + diphosphate. In terms of biological role, catalyzes the attachment of isoleucine to tRNA(Ile). As IleRS can inadvertently accommodate and process structurally similar amino acids such as valine, to avoid such errors it has two additional distinct tRNA(Ile)-dependent editing activities. One activity is designated as 'pretransfer' editing and involves the hydrolysis of activated Val-AMP. The other activity is designated 'posttransfer' editing and involves deacylation of mischarged Val-tRNA(Ile). The chain is Isoleucine--tRNA ligase from Thermobifida fusca (strain YX).